Consider the following 115-residue polypeptide: NADH-ubiquinone oxidoreductase chain 3 (115 aa).

Transmembrane regions (helical) follow at residues 3–23, 55–75, and 84–104; these read FALI…ITFW, FFLV…LLPL, and LPLM…SLAY.

It belongs to the complex I subunit 3 family. Core subunit of respiratory chain NADH dehydrogenase (Complex I) which is composed of 45 different subunits. Interacts with TMEM186. Interacts with TMEM242.

It is found in the mitochondrion inner membrane. It catalyses the reaction a ubiquinone + NADH + 5 H(+)(in) = a ubiquinol + NAD(+) + 4 H(+)(out). Core subunit of the mitochondrial membrane respiratory chain NADH dehydrogenase (Complex I) which catalyzes electron transfer from NADH through the respiratory chain, using ubiquinone as an electron acceptor. Essential for the catalytic activity of complex I. The protein is NADH-ubiquinone oxidoreductase chain 3 of Homo sapiens (Human).